A 220-amino-acid chain; its full sequence is Probable nicotinate-nucleotide adenylyltransferase (220 aa).

Belongs to the NadD family.

The catalysed reaction is nicotinate beta-D-ribonucleotide + ATP + H(+) = deamido-NAD(+) + diphosphate. Its pathway is cofactor biosynthesis; NAD(+) biosynthesis; deamido-NAD(+) from nicotinate D-ribonucleotide: step 1/1. Its function is as follows. Catalyzes the reversible adenylation of nicotinate mononucleotide (NaMN) to nicotinic acid adenine dinucleotide (NaAD). This Yersinia pseudotuberculosis serotype O:1b (strain IP 31758) protein is Probable nicotinate-nucleotide adenylyltransferase.